The sequence spans 136 residues: MGKDTIADLLTSIRNADMNKKGTVRVVSTNITENIVKILLREGFLESVRKHQERNRYFLVSTLRHQKRKTRKGIYRTRTFLKRISRPGLRIYTNYQGIPKVLGGMGIAILSTSRGIMTDREARLNRIGGEVLCYIW.

Belongs to the universal ribosomal protein uS8 family. As to quaternary structure, part of the 30S ribosomal subunit.

It is found in the plastid. Its subcellular location is the chloroplast. Functionally, one of the primary rRNA binding proteins, it binds directly to 16S rRNA central domain where it helps coordinate assembly of the platform of the 30S subunit. The sequence is that of Small ribosomal subunit protein uS8c (rps8) from Hordeum vulgare (Barley).